Reading from the N-terminus, the 51-residue chain is Insulin (51 aa).

3 cysteine pairs are disulfide-bonded: Cys-8–Cys-37, Cys-20–Cys-50, and Cys-36–Cys-41.

Belongs to the insulin family. In terms of assembly, heterodimer of a B chain and an A chain linked by two disulfide bonds.

Its subcellular location is the secreted. In terms of biological role, insulin decreases blood glucose concentration. It increases cell permeability to monosaccharides, amino acids and fatty acids. It accelerates glycolysis, the pentose phosphate cycle, and glycogen synthesis in liver. This chain is Insulin, found in Seriola quinqueradiata (Five-ray yellowtail).